Reading from the N-terminus, the 206-residue chain is Holliday junction branch migration complex subunit RuvA (206 aa).

The domain I stretch occupies residues 1-68 (MITFVRGMLA…EDAMQLFGFL (68 aa)). Residues 69–147 (EPGERELFGQ…KWREESGLSA (79 aa)) form a domain II region. A flexible linker region spans residues 147–151 (AMGAR). The tract at residues 152–206 (ASSRVYEEVELALLALGFAPGEVVRALDAVAPAMAGEEQTEAWLRAAIAWLSEQG) is domain III.

This sequence belongs to the RuvA family. As to quaternary structure, homotetramer. Forms an RuvA(8)-RuvB(12)-Holliday junction (HJ) complex. HJ DNA is sandwiched between 2 RuvA tetramers; dsDNA enters through RuvA and exits via RuvB. An RuvB hexamer assembles on each DNA strand where it exits the tetramer. Each RuvB hexamer is contacted by two RuvA subunits (via domain III) on 2 adjacent RuvB subunits; this complex drives branch migration. In the full resolvosome a probable DNA-RuvA(4)-RuvB(12)-RuvC(2) complex forms which resolves the HJ.

Its subcellular location is the cytoplasm. In terms of biological role, the RuvA-RuvB-RuvC complex processes Holliday junction (HJ) DNA during genetic recombination and DNA repair, while the RuvA-RuvB complex plays an important role in the rescue of blocked DNA replication forks via replication fork reversal (RFR). RuvA specifically binds to HJ cruciform DNA, conferring on it an open structure. The RuvB hexamer acts as an ATP-dependent pump, pulling dsDNA into and through the RuvAB complex. HJ branch migration allows RuvC to scan DNA until it finds its consensus sequence, where it cleaves and resolves the cruciform DNA. The polypeptide is Holliday junction branch migration complex subunit RuvA (Gloeobacter violaceus (strain ATCC 29082 / PCC 7421)).